The sequence spans 623 residues: Dictomallein-5 (623 aa).

The N-terminal stretch at 1-21 (MKIFIIKIILVLFNYVLLSYS) is a signal peptide. Residues 174–435 (PNVGQDYTLK…QNYFKNSIYY (262 aa)) enclose the Peptidase M66 domain. Histidine 327 contacts Zn(2+). Glutamate 328 is an active-site residue. Zn(2+) contacts are provided by histidine 331 and histidine 337.

This sequence belongs to the dictomallein family. Zn(2+) is required as a cofactor.

It localises to the secreted. The chain is Dictomallein-5 (dtmlE) from Dictyostelium discoideum (Social amoeba).